Here is a 219-residue protein sequence, read N- to C-terminus: Probable N-acetyltransferase camello (219 aa).

2 consecutive transmembrane segments (helical) span residues 44-64 and 66-86; these read FITFVAFTSVFMGTGSYVLAL and SLVALLAAGWYGLYSEFHGLA. The region spanning 62-211 is the N-acetyltransferase domain; the sequence is LALTSLVALL…VHQYTSFTVA (150 aa).

It belongs to the camello family.

The protein resides in the golgi apparatus membrane. Plays a role in regulation of gastrulation, possibly by controlled reduction of cell adhesion in the periblastopore region which is necessary for optimal cell motility. This Xenopus tropicalis (Western clawed frog) protein is Probable N-acetyltransferase camello.